A 288-amino-acid polypeptide reads, in one-letter code: ATP synthase gamma chain (288 aa).

Belongs to the ATPase gamma chain family. As to quaternary structure, F-type ATPases have 2 components, CF(1) - the catalytic core - and CF(0) - the membrane proton channel. CF(1) has five subunits: alpha(3), beta(3), gamma(1), delta(1), epsilon(1). CF(0) has three main subunits: a, b and c.

The protein resides in the cell membrane. Produces ATP from ADP in the presence of a proton gradient across the membrane. The gamma chain is believed to be important in regulating ATPase activity and the flow of protons through the CF(0) complex. The sequence is that of ATP synthase gamma chain from Staphylococcus aureus (strain bovine RF122 / ET3-1).